The following is a 209-amino-acid chain: MKGLIGRKVGMTRIFTEDGVSIPVTVIEIEANRVTQVKDLENDGYRAIQVTAGTKKANRVIKPEAGHFAKAGVEAGRGLWEFRVEDGEEVTVGQSITVELFADVKKVDVTGTSKGKGFAGTVKRWNFRTQDATHGNSLSHRVPGSIGQNQTPGKVFKGKKMAGQLGNERVTVQSLDVVRVDVERNLLLVKGAVPGATGGDLIVKPAVKA.

A disordered region spans residues 133-152 (THGNSLSHRVPGSIGQNQTP). Glutamine 150 is subject to N5-methylglutamine.

This sequence belongs to the universal ribosomal protein uL3 family. Part of the 50S ribosomal subunit. Forms a cluster with proteins L14 and L19. Methylated by PrmB.

Functionally, one of the primary rRNA binding proteins, it binds directly near the 3'-end of the 23S rRNA, where it nucleates assembly of the 50S subunit. In Sodalis glossinidius (strain morsitans), this protein is Large ribosomal subunit protein uL3.